We begin with the raw amino-acid sequence, 648 residues long: Macrolide export ATP-binding/permease protein MacB (648 aa).

The ABC transporter domain maps to 5–243; it reads LELCNVSRSY…QGVDAAVVNT (239 aa). 41-48 contacts ATP; the sequence is GVSGSGKS. A run of 5 helical transmembrane segments spans residues 273-293, 417-437, 523-543, 577-597, and 611-631; these read LLTM…VVVG, ANVV…IGVA, LFLT…VMNI, VLVC…IAFM, and LTAL…FGWL.

The protein belongs to the ABC transporter superfamily. Macrolide exporter (TC 3.A.1.122) family. Homodimer. Part of the tripartite efflux system MacAB-TolC, which is composed of an inner membrane transporter, MacB, a periplasmic membrane fusion protein, MacA, and an outer membrane component, TolC. The complex forms a large protein conduit and can translocate molecules across both the inner and outer membranes. Interacts with MacA.

It localises to the cell inner membrane. In terms of biological role, part of the tripartite efflux system MacAB-TolC. MacB is a non-canonical ABC transporter that contains transmembrane domains (TMD), which form a pore in the inner membrane, and an ATP-binding domain (NBD), which is responsible for energy generation. Confers resistance against macrolides. The polypeptide is Macrolide export ATP-binding/permease protein MacB (Salmonella typhi).